The following is a 296-amino-acid chain: Phosphatidylserine decarboxylase proenzyme (296 aa).

Residues D113, H169, and S256 each act as charge relay system; for autoendoproteolytic cleavage activity in the active site. Residue S256 is the Schiff-base intermediate with substrate; via pyruvic acid; for decarboxylase activity of the active site. The residue at position 256 (S256) is a Pyruvic acid (Ser); by autocatalysis.

Belongs to the phosphatidylserine decarboxylase family. PSD-B subfamily. Prokaryotic type II sub-subfamily. As to quaternary structure, heterodimer of a large membrane-associated beta subunit and a small pyruvoyl-containing alpha subunit. Requires pyruvate as cofactor. Post-translationally, is synthesized initially as an inactive proenzyme. Formation of the active enzyme involves a self-maturation process in which the active site pyruvoyl group is generated from an internal serine residue via an autocatalytic post-translational modification. Two non-identical subunits are generated from the proenzyme in this reaction, and the pyruvate is formed at the N-terminus of the alpha chain, which is derived from the carboxyl end of the proenzyme. The autoendoproteolytic cleavage occurs by a canonical serine protease mechanism, in which the side chain hydroxyl group of the serine supplies its oxygen atom to form the C-terminus of the beta chain, while the remainder of the serine residue undergoes an oxidative deamination to produce ammonia and the pyruvoyl prosthetic group on the alpha chain. During this reaction, the Ser that is part of the protease active site of the proenzyme becomes the pyruvoyl prosthetic group, which constitutes an essential element of the active site of the mature decarboxylase.

The protein localises to the cell membrane. It carries out the reaction a 1,2-diacyl-sn-glycero-3-phospho-L-serine + H(+) = a 1,2-diacyl-sn-glycero-3-phosphoethanolamine + CO2. Its pathway is phospholipid metabolism; phosphatidylethanolamine biosynthesis; phosphatidylethanolamine from CDP-diacylglycerol: step 2/2. Functionally, catalyzes the formation of phosphatidylethanolamine (PtdEtn) from phosphatidylserine (PtdSer). The polypeptide is Phosphatidylserine decarboxylase proenzyme (Clostridium beijerinckii (strain ATCC 51743 / NCIMB 8052) (Clostridium acetobutylicum)).